Reading from the N-terminus, the 61-residue chain is Alpha-conotoxin CnIJ (61 aa).

Positions 1–17 (MMFTVFLLVVLTTTVVS) are cleaved as a signal peptide. A propeptide spanning residues 18–44 (FPSDSASDGRDDEAKDERSDMYELKRN) is cleaved from the precursor. 2 cysteine pairs are disulfide-bonded: Cys-47/Cys-52 and Cys-48/Cys-59. Cys-59 bears the Cysteine amide mark.

Belongs to the conotoxin A superfamily. In terms of tissue distribution, expressed by the venom duct.

Its subcellular location is the secreted. This chain is Alpha-conotoxin CnIJ, found in Conus consors (Singed cone).